Reading from the N-terminus, the 270-residue chain is 4-hydroxy-tetrahydrodipicolinate reductase (270 aa).

Residue 7-12 (GANGKM) participates in NAD(+) binding. NADP(+) is bound at residue arginine 34. Residues 97–99 (GTT) and 121–124 (SGNM) contribute to the NAD(+) site. Residue histidine 155 is the Proton donor/acceptor of the active site. Histidine 156 is a binding site for (S)-2,3,4,5-tetrahydrodipicolinate. Lysine 159 functions as the Proton donor in the catalytic mechanism. 165-166 (GT) lines the (S)-2,3,4,5-tetrahydrodipicolinate pocket.

The protein belongs to the DapB family.

The protein resides in the cytoplasm. The enzyme catalyses (S)-2,3,4,5-tetrahydrodipicolinate + NAD(+) + H2O = (2S,4S)-4-hydroxy-2,3,4,5-tetrahydrodipicolinate + NADH + H(+). The catalysed reaction is (S)-2,3,4,5-tetrahydrodipicolinate + NADP(+) + H2O = (2S,4S)-4-hydroxy-2,3,4,5-tetrahydrodipicolinate + NADPH + H(+). The protein operates within amino-acid biosynthesis; L-lysine biosynthesis via DAP pathway; (S)-tetrahydrodipicolinate from L-aspartate: step 4/4. Its function is as follows. Catalyzes the conversion of 4-hydroxy-tetrahydrodipicolinate (HTPA) to tetrahydrodipicolinate. This is 4-hydroxy-tetrahydrodipicolinate reductase from Bartonella quintana (strain Toulouse) (Rochalimaea quintana).